A 431-amino-acid chain; its full sequence is Ribosome assembly protein SQT1 (431 aa).

WD repeat units follow at residues 63–102 (KHTDSVFAIGHHPNLPLVCTGGGDNLAHLWTSHSQPPKFA), 107–146 (GYGESVISCSFTSEGGFLVTADMSGKVLVHMGQKGGAQWK), 149–192 (SQMQ…GSLE), 199–243 (VHQQ…QLFK), 309–348 (ELDASIESISWSSKFSLMAIGLVCGEILLYDTSAWRVRHK), and 350–387 (VLEDSVTKLMFDNDDLFASCINGKVYQFNARTGQEKFV).

Interacts strongly with QSR1. Part of an oligomeric protein complex that is loosely associated with ribosomes.

In terms of biological role, may be involved in the late step of 60S ribosomal subunit assembly or modification in the cytoplasm. The protein is Ribosome assembly protein SQT1 (SQT1) of Saccharomyces cerevisiae (strain ATCC 204508 / S288c) (Baker's yeast).